The following is a 214-amino-acid chain: Protein transport protein SEC22 (214 aa).

The Cytoplasmic portion of the chain corresponds to 1–192; it reads MIKSTLIFRD…QKINFDLLLS (192 aa). The Longin domain occupies 6-117; the sequence is LIFRDDGLPL…YAFVSFDNFL (112 aa). The region spanning 132 to 192 is the v-SNARE coiled-coil homology domain; it reads NLDQLNSDLL…QKINFDLLLS (61 aa). The chain crosses the membrane as a helical; Anchor for type IV membrane protein span at residues 193–213; the sequence is QYAPVALIGLFFLFLVWWLVF. Arg214 is a topological domain (vesicular).

Belongs to the synaptobrevin family.

The protein localises to the membrane. The protein resides in the endoplasmic reticulum membrane. It localises to the golgi apparatus membrane. Functionally, required for transport from the ER to the Golgi complex. The chain is Protein transport protein SEC22 (SEC22) from Eremothecium gossypii (strain ATCC 10895 / CBS 109.51 / FGSC 9923 / NRRL Y-1056) (Yeast).